Reading from the N-terminus, the 542-residue chain is La-related protein 7 homolog (542 aa).

The HTH La-type RNA-binding domain maps to 112 to 239 (VAEELDIKES…KRRFPFNLEQ (128 aa)). Residues 247–335 (RTLYIDFLPP…GSIRIITYKK (89 aa)) form the RRM domain. The region spanning 374–542 (EIKQNCLIKI…KQNITQNYNK (169 aa)) is the xRRM domain.

This sequence belongs to the LARP7 family. Component of the telomerase holoenzyme complex, composed of the catalytic core (the catalytic subunit TERT, the telomerase RNA template component TER and TAP65/p65), which is associated with two heterotrimeric subcomplexes: (i) the replication protein A (RPA)-related subcomplex, composed of TEB1, RPA2/TEB2 and RPA3/TEB3 and (ii) the CST-like subcomplex, composed of TAP75/p75, TAP45/p45 and TAP19/p19. TEB1 and the CST-like subcomplex are tethered to the catalytic core by TAP50/p50.

It localises to the chromosome. Its subcellular location is the telomere. RNA-binding protein required for assembly of the holoenzyme telomerase ribonucleoprotein (RNP) complex. Telomerase is an essential ribonucleoprotein enzyme that copies new telomeric repeats onto chromosome ends by repetitively synthesizing the short telomere-repeat sequence 5'-TTGGGG-3' using an RNA template component TER. TAP65/p65 specifically binds telomerase RNA template TER and is required for biogenesis and placement of the TER stem-terminus element: TAP65/p65 first protects the 3'-end of TER from degradation and acts as a chaperone to correctly fold TER for protein binding; it then bends TER stem-loop IV to position it for interaction of stem-loop IV with catalytic TERT RNA-binding domain. The chain is La-related protein 7 homolog from Tetrahymena thermophila (strain SB210).